The sequence spans 789 residues: Mediator of RNA polymerase II transcription subunit 15 (789 aa).

Residues 9–73 form an interaction with SREBF1 region; sequence DWRSAAFRQK…IHFRDIHNKK (65 aa). Disordered stretches follow at residues 88-140 and 257-326; these read LTGG…APHG and QQQA…PLVS. The span at 89 to 102 shows a compositional bias: low complexity; the sequence is TGGPTPGAAGIGMP. Positions 108-118 are enriched in gly residues; the sequence is QSLGGMGGLGA. Composition is skewed to low complexity over residues 257–274, 282–291, and 302–326; these read QQQALQAQPPMQQPSMQQ, ALPQQLSQLH, and AQQSPIAQNQPPQIPPQSQSQPLVS. Arginine 347 carries the post-translational modification Asymmetric dimethylarginine. The disordered stretch occupies residues 404 to 531; the sequence is RFPPTSTMSA…PAGSSQAEEQ (128 aa). The span at 407 to 426 shows a compositional bias: polar residues; sequence PTSTMSAGPSSSISLGGQPT. The span at 427–450 shows a compositional bias: low complexity; that stretch reads TQVSQSSLTMLSSPSPGQQVQTPQ. The segment covering 451 to 463 has biased composition (pro residues); the sequence is SMPPPPQPSPQPG. The span at 464-483 shows a compositional bias: low complexity; sequence SQPNSNVSSGPAPSPSSFLP. Polar residues-rich tracts occupy residues 494–504 and 512–530; these read VTARTPQNFSV and TPVNPSSVMSPAGSSQAEE. Positions 548 to 565 match the Nuclear localization signal motif; sequence RRMINKIDKNEDRKKDLS. Threonine 604 is modified (phosphothreonine).

It belongs to the Mediator complex subunit 15 family. Component of the Mediator complex, which is composed of MED1, MED4, MED6, MED7, MED8, MED9, MED10, MED11, MED12, MED13, MED13L, MED14, MED15, MED16, MED17, MED18, MED19, MED20, MED21, MED22, MED23, MED24, MED25, MED26, MED27, MED29, MED30, MED31, CCNC, CDK8 and CDC2L6/CDK11. The MED12, MED13, CCNC and CDK8 subunits form a distinct module termed the CDK8 module. Mediator containing the CDK8 module is less active than Mediator lacking this module in supporting transcriptional activation. Individual preparations of the Mediator complex lacking one or more distinct subunits have been variously termed ARC, CRSP, DRIP, PC2, SMCC and TRAP. Interacts with SMAD2, SMAD3, SREBF1 and SREBF2. Interacts with WWTR1. Interacts with TRIM11. Ubiquitinated by TRIM11, leading to proteasomal degradation.

The protein resides in the cytoplasm. It is found in the nucleus. Functionally, component of the Mediator complex, a coactivator involved in the regulated transcription of nearly all RNA polymerase II-dependent genes. Mediator functions as a bridge to convey information from gene-specific regulatory proteins to the basal RNA polymerase II transcription machinery. Mediator is recruited to promoters by direct interactions with regulatory proteins and serves as a scaffold for the assembly of a functional preinitiation complex with RNA polymerase II and the general transcription factors. Required for cholesterol-dependent gene regulation. Positively regulates the Nodal signaling pathway. The sequence is that of Mediator of RNA polymerase II transcription subunit 15 (Med15) from Mus musculus (Mouse).